The sequence spans 444 residues: L-ornithine N(5)-monooxygenase (444 aa).

Residues 40–48 (ERQPAFGWH) and Gln-59 contribute to the FAD site. Lys-64 contacts substrate. Position 125 (Val-125) interacts with FAD. NADP(+)-binding positions include 211 to 214 (AGQS) and Arg-236. Substrate is bound by residues 250-253 (NEIF) and Asn-280. 280–282 (NYA) contacts NADP(+). FAD is bound at residue 408–410 (RCC). The span at 420-432 (SARRSKTGSRPRT) shows a compositional bias: basic residues. The disordered stretch occupies residues 420 to 444 (SARRSKTGSRPRTMKAWPGPRTKND).

It belongs to the lysine N(6)-hydroxylase/L-ornithine N(5)-oxygenase family. FAD serves as cofactor.

The enzyme catalyses L-ornithine + NADPH + O2 = N(5)-hydroxy-L-ornithine + NADP(+) + H2O. It functions in the pathway siderophore biosynthesis; ornibactin biosynthesis. Functionally, catalyzes the conversion of L-ornithine to N(5)-hydroxyornithine, the first step in the biosynthesis of all hydroxamate-containing siderophores, such as ornibactin. This is L-ornithine N(5)-monooxygenase from Burkholderia cepacia (Pseudomonas cepacia).